The following is a 376-amino-acid chain: Carbohydrate sulfotransferase 14 (376 aa).

Residues 1–30 (MFPRPLTPLAAPKSAETLGRTPRRAPLGRA) are disordered. Topologically, residues 1–39 (MFPRPLTPLAAPKSAETLGRTPRRAPLGRARAGLGGPPL) are cytoplasmic. Residues 18–30 (LGRTPRRAPLGRA) show a composition bias toward low complexity. The helical; Signal-anchor for type II membrane protein transmembrane segment at 40–60 (LLPSMLMFAVIVASSGLLLMI) threads the bilayer. The Lumenal segment spans residues 61 to 376 (ERGILSEMKP…PNVTKEACHQ (316 aa)). The disordered stretch occupies residues 76 to 96 (PSHKGAAWSGTDPKPRGLSLD). A glycan (N-linked (GlcNAc...) asparagine) is linked at Asn-110. 3'-phosphoadenylyl sulfate is bound by residues 155–161 (PKVACSN) and 213–221 (RDPLERLLS). A glycan (N-linked (GlcNAc...) asparagine) is linked at Asn-368.

Belongs to the sulfotransferase 2 family.

Its subcellular location is the golgi apparatus membrane. The enzyme catalyses dermatan + n 3'-phosphoadenylyl sulfate = dermatan 4'-sulfate + n adenosine 3',5'-bisphosphate + n H(+). Its function is as follows. Catalyzes the transfer of sulfate to position 4 of the N-acetylgalactosamine (GalNAc) residue of dermatan sulfate. Plays a pivotal role in the formation of 4-0-sulfated IdoA blocks in dermatan sulfate. Transfers sulfate to the C-4 hydroxyl of beta1,4-linked GalNAc that is substituted with an alpha-linked iduronic acid (IdoUA) at the C-3 hydroxyl. Transfers sulfate more efficiently to GalNAc residues in -IdoUA-GalNAc-IdoUA- than in -GlcUA-GalNAc-GlcUA-sequences. Has preference for partially desulfated dermatan sulfate. Addition of sulfate to GalNAc may occur immediately after epimerization of GlcUA to IdoUA. Appears to have an important role in the formation of the cerebellar neural network during postnatal brain development. This Mus musculus (Mouse) protein is Carbohydrate sulfotransferase 14 (Chst14).